A 95-amino-acid chain; its full sequence is Opiscorpine-4 (95 aa).

The N-terminal stretch at methionine 1–cysteine 19 is a signal peptide. The BetaSPN-type CS-alpha/beta domain occupies glutamate 55–tyrosine 95. Disulfide bonds link cysteine 58–cysteine 82, cysteine 68–cysteine 87, and cysteine 72–cysteine 89.

The protein belongs to the long chain scorpion toxin family. Class 3 subfamily. In terms of tissue distribution, expressed by the venom gland.

The protein localises to the secreted. Has antimicrobial activity against yeasts and bacteria. The sequence is that of Opiscorpine-4 from Opistophthalmus carinatus (African yellow leg scorpion).